The chain runs to 306 residues: HTH-type transcriptional regulator AlkR (306 aa).

An HTH araC/xylS-type domain is found at 207–305 (SNALAAIHAY…EQSPKHYRQQ (99 aa)). 2 consecutive DNA-binding regions (H-T-H motif) follow at residues 224–245 (ESLA…QSIV) and 272–295 (IQQI…KRQF).

It participates in hydrocarbon metabolism; alkane degradation. Functionally, this protein activates the expression of the alkane 1-monooxygenase AlkM. The chain is HTH-type transcriptional regulator AlkR (alkR) from Acinetobacter baylyi (strain ATCC 33305 / BD413 / ADP1).